The primary structure comprises 642 residues: Threonine--tRNA ligase (642 aa).

The 61-residue stretch at 1-61 (MPIITLPDGS…STDSDLSIIT (61 aa)) folds into the TGS domain. The interval 243 to 534 (DHRKIGKQLD…LIEEYAGKFP (292 aa)) is catalytic. The Zn(2+) site is built by Cys334, His385, and His511.

It belongs to the class-II aminoacyl-tRNA synthetase family. In terms of assembly, homodimer. The cofactor is Zn(2+).

The protein localises to the cytoplasm. The enzyme catalyses tRNA(Thr) + L-threonine + ATP = L-threonyl-tRNA(Thr) + AMP + diphosphate + H(+). Its function is as follows. Catalyzes the attachment of threonine to tRNA(Thr) in a two-step reaction: L-threonine is first activated by ATP to form Thr-AMP and then transferred to the acceptor end of tRNA(Thr). Also edits incorrectly charged L-seryl-tRNA(Thr). The protein is Threonine--tRNA ligase of Shewanella denitrificans (strain OS217 / ATCC BAA-1090 / DSM 15013).